A 737-amino-acid polypeptide reads, in one-letter code: Aryl hydrocarbon receptor nuclear translocator 2 (737 aa).

The segment at 1–73 (MATPAAVNPS…SRYDDDQIPG (73 aa)) is disordered. Basic and acidic residues predominate over residues 64–73 (SRYDDDQIPG). The bHLH domain occupies 78-131 (YARENHSEIERRRRNKMTQYITELSDMVPTCSALARKPDKLTILRMAVSHMKSM). PAS domains lie at 149–221 (TEQE…ENSM) and 340–406 (SMDM…QVVK). Residues 413 to 456 (SVMYRFRMKNREWMLIRTSSFTFQNPYSDEIEYIICTNTNVKQL) enclose the PAC domain. Disordered regions lie at residues 525–556 (MMVP…FSSS) and 588–721 (QVSW…TTNY). Polar residues-rich tracts occupy residues 528–543 (PSST…QGSP) and 588–626 (QVSW…YQAD). Over residues 627 to 642 (PSSYSPLSSPATSSPS) the composition is skewed to low complexity. The span at 643-656 (GNAYSNLANRNTAF) shows a compositional bias: polar residues. Positions 659 to 688 (SGESSQSGGQFQGRPSEVWSQWQSQHHSQQ) are enriched in low complexity.

Efficient DNA binding requires dimerization with another bHLH protein. Heterodimer with the aryl hydrocarbon receptor (AHR), SIM1 or HIF2A/EPAS-1. As to expression, isoform 1 and isoform 2 are most highly expressed in the brain, eye and skeletal muscle and to a lower degree in liver, heart, kidney and swim bladder. Isoform 3 is most highly expressed in the eye, forebrain, midbrain, hindbrain, skeletal muscle, gills and brain but is barely detectable in liver, heart, kidney and swim bladder. Before the pharyngula period isoform 3 is expressed throughout the entire embryo and during this period extensively in the brain and eye.

It localises to the nucleus. Transcription factor that plays a role in the development of the hypothalamo-pituitary axis. Specifically recognizes the xenobiotic response element (XRE). Isoform 1 acts as a transcriptional activator. Isoform 3 acts as a transcriptional repressor. This is Aryl hydrocarbon receptor nuclear translocator 2 from Danio rerio (Zebrafish).